The primary structure comprises 133 residues: Large ribosomal subunit protein uL14 (133 aa).

This sequence belongs to the universal ribosomal protein uL14 family. Part of the 50S ribosomal subunit. Forms a cluster with proteins L3 and L24e, part of which may contact the 16S rRNA in 2 intersubunit bridges.

Functionally, binds to 23S rRNA. Forms part of two intersubunit bridges in the 70S ribosome. The chain is Large ribosomal subunit protein uL14 from Nanoarchaeum equitans (strain Kin4-M).